A 212-amino-acid polypeptide reads, in one-letter code: MALYGLRQLDHRNAYASNGSYKPYLINNLSYLHDSSFVPVYKGCGTTDMGQHFTSEYPPYVGWVTRDATTMDASAGVRLCLDTPPMTSGANRTLFDARYKQWYPDYTHLPGQIQYYMRPEMTRPFAPPLWSADTTALAGIRIDSMDNVHYDFYRANGQNGCPAQPERCGECFIRELRDVQDHREDILASHTARLNRNKYEPIWFNWTSQYLR.

It belongs to the IIV-6 309L family.

This is an uncharacterized protein from Aedes vexans (Inland floodwater mosquito).